Consider the following 432-residue polypeptide: 3-phosphoshikimate 1-carboxyvinyltransferase (432 aa).

3-phosphoshikimate is bound by residues Lys-23, Ser-24, and Arg-28. Phosphoenolpyruvate is bound at residue Lys-23. Phosphoenolpyruvate contacts are provided by Gly-95 and Arg-123. Residues Ser-167, Gln-169, Asp-317, and Lys-344 each coordinate 3-phosphoshikimate. Phosphoenolpyruvate is bound at residue Gln-169. Residue Asp-317 is the Proton acceptor of the active site. Residues Arg-348 and Arg-390 each contribute to the phosphoenolpyruvate site.

This sequence belongs to the EPSP synthase family. Monomer.

The protein resides in the cytoplasm. It catalyses the reaction 3-phosphoshikimate + phosphoenolpyruvate = 5-O-(1-carboxyvinyl)-3-phosphoshikimate + phosphate. It functions in the pathway metabolic intermediate biosynthesis; chorismate biosynthesis; chorismate from D-erythrose 4-phosphate and phosphoenolpyruvate: step 6/7. In terms of biological role, catalyzes the transfer of the enolpyruvyl moiety of phosphoenolpyruvate (PEP) to the 5-hydroxyl of shikimate-3-phosphate (S3P) to produce enolpyruvyl shikimate-3-phosphate and inorganic phosphate. This chain is 3-phosphoshikimate 1-carboxyvinyltransferase, found in Staphylococcus aureus (strain COL).